A 1571-amino-acid polypeptide reads, in one-letter code: Pentafunctional AROM polypeptide (1571 aa).

The segment at 1–380 (MTSVEKVSIL…YQLKAHQVSK (380 aa)) is 3-dehydroquinate synthase. Residues 43-45 (DTN), 81-84 (ENNK), 112-114 (GGV), and Asp-117 each bind NAD(+). Arg-128 is a binding site for 7-phospho-2-dehydro-3-deoxy-D-arabino-heptonate. 137-138 (TS) serves as a coordination point for NAD(+). 7-phospho-2-dehydro-3-deoxy-D-arabino-heptonate is bound by residues Asp-144 and Lys-150. Lys-159 lines the NAD(+) pocket. Asn-160 contacts 7-phospho-2-dehydro-3-deoxy-D-arabino-heptonate. NAD(+)-binding positions include 177 to 180 (FLET) and Asn-188. A Zn(2+)-binding site is contributed by Glu-192. 7-phospho-2-dehydro-3-deoxy-D-arabino-heptonate is bound by residues 192–195 (EVVK) and Lys-244. The active-site Proton acceptor; for 3-dehydroquinate synthase activity is Glu-254. 7-phospho-2-dehydro-3-deoxy-D-arabino-heptonate is bound by residues 258 to 262 (RNLLN) and His-265. Zn(2+) is bound at residue His-265. His-269 functions as the Proton acceptor; for 3-dehydroquinate synthase activity in the catalytic mechanism. 7-phospho-2-dehydro-3-deoxy-D-arabino-heptonate is bound by residues His-281 and Lys-352. His-281 is a binding site for Zn(2+). The segment at 393–843 (VHPFDDKLIP…WDILHTKFKV (451 aa)) is EPSP synthase. The active-site For EPSP synthase activity is Cys-825. The segment at 868 to 1058 (KRSIIVIGMR…IPKKRSFYTS (191 aa)) is shikimate kinase. 875-882 (GMRGAGKS) contributes to the ATP binding site. Positions 1059–1271 (LTFSDLTEVA…GNEGALDVAQ (213 aa)) are 3-dehydroquinase. The active-site Schiff-base intermediate with substrate; for 3-dehydroquinate dehydratase activity is Lys-1204. The tract at residues 1284–1571 (EKHFWIVGNP…DVVHDAVVNQ (288 aa)) is shikimate dehydrogenase.

The protein in the N-terminal section; belongs to the sugar phosphate cyclases superfamily. Dehydroquinate synthase family. It in the 2nd section; belongs to the EPSP synthase family. In the 3rd section; belongs to the shikimate kinase family. This sequence in the 4th section; belongs to the type-I 3-dehydroquinase family. The protein in the C-terminal section; belongs to the shikimate dehydrogenase family. As to quaternary structure, homodimer. It depends on Zn(2+) as a cofactor.

It localises to the cytoplasm. It carries out the reaction 7-phospho-2-dehydro-3-deoxy-D-arabino-heptonate = 3-dehydroquinate + phosphate. The enzyme catalyses 3-dehydroquinate = 3-dehydroshikimate + H2O. It catalyses the reaction shikimate + NADP(+) = 3-dehydroshikimate + NADPH + H(+). The catalysed reaction is shikimate + ATP = 3-phosphoshikimate + ADP + H(+). It carries out the reaction 3-phosphoshikimate + phosphoenolpyruvate = 5-O-(1-carboxyvinyl)-3-phosphoshikimate + phosphate. The protein operates within metabolic intermediate biosynthesis; chorismate biosynthesis; chorismate from D-erythrose 4-phosphate and phosphoenolpyruvate: step 2/7. It functions in the pathway metabolic intermediate biosynthesis; chorismate biosynthesis; chorismate from D-erythrose 4-phosphate and phosphoenolpyruvate: step 3/7. It participates in metabolic intermediate biosynthesis; chorismate biosynthesis; chorismate from D-erythrose 4-phosphate and phosphoenolpyruvate: step 4/7. Its pathway is metabolic intermediate biosynthesis; chorismate biosynthesis; chorismate from D-erythrose 4-phosphate and phosphoenolpyruvate: step 5/7. The protein operates within metabolic intermediate biosynthesis; chorismate biosynthesis; chorismate from D-erythrose 4-phosphate and phosphoenolpyruvate: step 6/7. In terms of biological role, the AROM polypeptide catalyzes 5 consecutive enzymatic reactions in prechorismate polyaromatic amino acid biosynthesis. The chain is Pentafunctional AROM polypeptide from Scheffersomyces stipitis (strain ATCC 58785 / CBS 6054 / NBRC 10063 / NRRL Y-11545) (Yeast).